Reading from the N-terminus, the 223-residue chain is Octanoyltransferase (223 aa).

One can recognise a BPL/LPL catalytic domain in the interval 35–214 (GEARELIWLL…HFPAMLAGLR (180 aa)). Substrate is bound by residues 74–81 (RGGRYTYH), 145–147 (AIG), and 158–160 (GFS). The active-site Acyl-thioester intermediate is Cys-176.

Belongs to the LipB family.

It is found in the cytoplasm. It carries out the reaction octanoyl-[ACP] + L-lysyl-[protein] = N(6)-octanoyl-L-lysyl-[protein] + holo-[ACP] + H(+). It functions in the pathway protein modification; protein lipoylation via endogenous pathway; protein N(6)-(lipoyl)lysine from octanoyl-[acyl-carrier-protein]: step 1/2. Catalyzes the transfer of endogenously produced octanoic acid from octanoyl-acyl-carrier-protein onto the lipoyl domains of lipoate-dependent enzymes. Lipoyl-ACP can also act as a substrate although octanoyl-ACP is likely to be the physiological substrate. The protein is Octanoyltransferase of Rhizorhabdus wittichii (strain DSM 6014 / CCUG 31198 / JCM 15750 / NBRC 105917 / EY 4224 / RW1) (Sphingomonas wittichii).